The chain runs to 120 residues: HTH-type transcriptional regulator NmtR (120 aa).

The HTH arsR-type domain maps to Leu15 to His109. Residues Val49 to Asn72 constitute a DNA-binding region (H-T-H motif). Asp91, His93, His104, and His107 together coordinate Ni(2+).

In terms of assembly, homodimer.

With respect to regulation, binding to DNA is inhibited by nickel and, to some extent, cobalt ions. In terms of biological role, represses transcription of ctpJ/nmtA, by binding to its promoter region. This Mycobacterium tuberculosis (strain ATCC 25618 / H37Rv) protein is HTH-type transcriptional regulator NmtR (nmtR).